Consider the following 358-residue polypeptide: Snurportin-1 (358 aa).

Methionine 1 is modified (N-acetylmethionine). Disordered regions lie at residues 1-39 and 69-89; these read MEEL…SSLE and DWTG…EMDL. The segment at 1-65 is necessary for interaction with KPNB1 and m3G-cap U1 and U5 snRNP import receptor activity; sequence MEELSQALAS…LDYVNHARRL (65 aa). Residues 1–160 form a necessary for interaction with XPO1 region; it reads MEELSQALAS…NRFSSLLPGG (160 aa). 2 stretches are compositionally biased toward polar residues: residues 7–22 and 30–39; these read ALAS…NSTA and QYKSKYSSLE. One can recognise an IBB domain in the interval 11–73; it reads SFSVSQELNS…RLAEDDWTGM (63 aa). A Phosphoserine modification is found at serine 75. An interaction with m3G-cap structure region spans residues 128 to 130; the sequence is GKR. The segment at 210–329 is necessary for binding to the m3G-cap structure; the sequence is MNSKLPEEEG…DTKEKLTHKA (120 aa). Basic and acidic residues predominate over residues 315–341; that stretch reads KRSQEDTKEKLTHKASENGHYELEHLS. The interval 315-358 is disordered; sequence KRSQEDTKEKLTHKASENGHYELEHLSTPKLRSPPHSSESLMDS. The span at 349–358 shows a compositional bias: polar residues; sequence PHSSESLMDS. Phosphoserine is present on serine 351.

The protein belongs to the snurportin family. Component of an import snRNP complex composed of KPNB1, SNUPN, SMN1 and ZNF259. Component of a nuclear export receptor complex composed of KPNB1, Ran, SNUPN and XPO1. Found in a trimeric export complex with SNUPN, Ran and XPO1. Interacts (via IBB domain) with KPNB1; the interaction is direct. Interacts with DDX20, IPO7, SMN1, SNRPB and XPO1. Interacts directly with XPO1. Its interaction with XPO1 and binding to m3G-cap U snRNPs appears to be mutually exclusive. Can form homomers.

It localises to the nucleus. The protein resides in the cytoplasm. Functionally, functions as an U snRNP-specific nuclear import adapter. Involved in the trimethylguanosine (m3G)-cap-dependent nuclear import of U snRNPs. Binds specifically to the terminal m3G-cap U snRNAs. The protein is Snurportin-1 (Snupn) of Rattus norvegicus (Rat).